A 202-amino-acid polypeptide reads, in one-letter code: Lipoprotein signal peptidase (202 aa).

A disordered region spans residues 1–29 (MPDEPTGSADPLTSTEEAGGAGEPNAPAP). 3 helical membrane-spanning segments follow: residues 35-55 (MLLS…VVAV), 88-108 (GYTW…FWMG), and 112-132 (VSPW…GNLV). Active-site residues include aspartate 148 and aspartate 162. Residues 160–180 (VADPSVVGGAILLVILSIFGF) traverse the membrane as a helical segment.

Belongs to the peptidase A8 family.

It is found in the cell membrane. The enzyme catalyses Release of signal peptides from bacterial membrane prolipoproteins. Hydrolyzes -Xaa-Yaa-Zaa-|-(S,diacylglyceryl)Cys-, in which Xaa is hydrophobic (preferably Leu), and Yaa (Ala or Ser) and Zaa (Gly or Ala) have small, neutral side chains.. Its pathway is protein modification; lipoprotein biosynthesis (signal peptide cleavage). This protein specifically catalyzes the removal of signal peptides from prolipoproteins. This Mycobacterium bovis (strain ATCC BAA-935 / AF2122/97) protein is Lipoprotein signal peptidase.